The primary structure comprises 220 residues: N-(5'-phosphoribosyl)anthranilate isomerase (220 aa).

This sequence belongs to the TrpF family.

It catalyses the reaction N-(5-phospho-beta-D-ribosyl)anthranilate = 1-(2-carboxyphenylamino)-1-deoxy-D-ribulose 5-phosphate. The protein operates within amino-acid biosynthesis; L-tryptophan biosynthesis; L-tryptophan from chorismate: step 3/5. The chain is N-(5'-phosphoribosyl)anthranilate isomerase from Agrobacterium fabrum (strain C58 / ATCC 33970) (Agrobacterium tumefaciens (strain C58)).